The primary structure comprises 145 residues: LIM domain only protein 3 (145 aa).

2 LIM zinc-binding domains span residues 11 to 73 (KGCA…LFGV) and 75 to 137 (GNCA…GLMK).

This is LIM domain only protein 3 from Danio rerio (Zebrafish).